We begin with the raw amino-acid sequence, 214 residues long: Osteoclast-stimulating factor 1 (214 aa).

N-acetylserine is present on Ser-2. The SH3 domain maps to 12-71 (GQVKVFRALYTFEPRTPDELYFEEGDIIYITDMSDTSWWKGTCKGRTGLIPSNYVAEQAE). 3 ANK repeats span residues 72 to 101 (SIDN…GVNG), 105 to 135 (AGST…ELNQ), and 139 to 168 (LGDT…RTDL). Phosphothreonine is present on Thr-200. Ser-202 and Ser-213 each carry phosphoserine.

In terms of assembly, interacts with SRC and SMN1. Interacts with FASLG.

The protein resides in the cytoplasm. Its function is as follows. Induces bone resorption, acting probably through a signaling cascade which results in the secretion of factor(s) enhancing osteoclast formation and activity. The polypeptide is Osteoclast-stimulating factor 1 (Ostf1) (Rattus norvegicus (Rat)).